A 545-amino-acid chain; its full sequence is Toxin BC_0920 (545 aa).

One can recognise an LXG domain in the interval 1–217 (MSLNMYLGEV…ARQAANSIEE (217 aa)).

It in the N-terminal section; belongs to the LXG family. The protein in the C-terminal section; belongs to the bacterial EndoU family. In terms of assembly, probably interacts with cognate immunity protein BC_0921. The interaction inhibits the toxic activity of BC_0921.

Its subcellular location is the secreted. Toxic component of an LXG toxin-immunity module. The C-terminus (residues 322-545) has RNase activity in E.coli which is neutralized by cognate immunity protein BC_0921, but not by immunity proteins specific to other toxins with the LXG domain. Degrades 5S rRNA and several tRNAs in vitro; cleavage is endonucleolytic within the anticodon loop for tRNA(GAU-Ile) and tRNA(UUC-Glu) but total for 5S rRNA and at least one other tRNA. RNase activity is suppressed by cognate immunity protein BC_0921. This chain is Toxin BC_0920, found in Bacillus cereus (strain ATCC 14579 / DSM 31 / CCUG 7414 / JCM 2152 / NBRC 15305 / NCIMB 9373 / NCTC 2599 / NRRL B-3711).